The primary structure comprises 113 residues: MAAKTGSQLERSISTIINVFHQYSRKYGHPDTLNKAEFKEMVNKDLPNFLKREKRNENLLRDIMEDLDTNQDNQLSFEECMMLMGKLIFACHEKLHENNPRGHDHSHGKGCGK.

Alanine 2 is modified (N-acetylalanine). 2 EF-hand domains span residues 13–48 and 55–90; these read ISTI…DLPN and RNEN…LIFA. Residue histidine 21 participates in Zn(2+) binding. 2 residues coordinate Ca(2+): serine 24 and histidine 29. Aspartate 31 contributes to the Zn(2+) binding site. Ca(2+)-binding residues include threonine 32, glutamate 37, aspartate 68, asparagine 70, aspartate 72, glutamine 74, and glutamate 79. 2 residues coordinate Zn(2+): histidine 92 and histidine 96. Histidine 107 is modified (pros-methylhistidine).

In terms of assembly, homodimer. Preferentially exists as a heterodimer or heterotetramer with S100A8 known as calprotectin (S100A8/A9). S100A9 interacts with ATP2A2. S100A9 interacts with AGER, and with the heterodimeric complex formed by TLR4 and LY96 in the presence of calcium and/or zinc ions. S100A9 binds quinoline-3-carboxamides in the presence of calcium and/or zinc ions. S100A9 interacts with amyloid-beta protein 40. Calprotectin (S100A8/9) interacts with CEACAM3 and tubulin filaments in a calcium-dependent manner. Heterotetrameric calprotectin (S100A8/A9) interacts with ANXA6 and associates with tubulin filaments in activated monocytes. Calprotectin (S100A8/9) interacts with NCF2/P67PHOX, RAC1, RAC2, CYBA and CYBB. Calprotectin (S100A8/9) interacts with NOS2 to form the iNOS-S100A8/A9 transnitrosylase complex; induced by LDL(ox). Calprotectin (S100A8/9) interacts with CD69. In terms of processing, phosphorylated. Phosphorylation inhibits activation of tubulin polymerization. Post-translationally, methylation at His-107 by METTL9 reduces zinc-binding without affecting heterodimerization with S100A8. As to expression, highly expressed at sites of inflammation.

Its subcellular location is the secreted. It localises to the cytoplasm. The protein resides in the cytoskeleton. It is found in the cell membrane. In terms of biological role, S100A9 is a calcium- and zinc-binding protein which plays a prominent role in the regulation of inflammatory processes and immune response. It can induce neutrophil chemotaxis, adhesion, can increase the bactericidal activity of neutrophils by promoting phagocytosis via activation of SYK, PI3K/AKT, and ERK1/2 and can induce degranulation of neutrophils by a MAPK-dependent mechanism. Predominantly found as calprotectin (S100A8/A9) which has a wide plethora of intra- and extracellular functions. The intracellular functions include: facilitating leukocyte arachidonic acid trafficking and metabolism, modulation of the tubulin-dependent cytoskeleton during migration of phagocytes and activation of the neutrophilic NADPH-oxidase. Also participates in regulatory T-cell differentiation together with CD69. Activates NADPH-oxidase by facilitating the enzyme complex assembly at the cell membrane, transferring arachidonic acid, an essential cofactor, to the enzyme complex and S100A8 contributes to the enzyme assembly by directly binding to NCF2/P67PHOX. The extracellular functions involve pro-inflammatory, antimicrobial, oxidant-scavenging and apoptosis-inducing activities. Its pro-inflammatory activity includes recruitment of leukocytes, promotion of cytokine and chemokine production, and regulation of leukocyte adhesion and migration. Acts as an alarmin or a danger associated molecular pattern (DAMP) molecule and stimulates innate immune cells via binding to pattern recognition receptors such as Toll-like receptor 4 (TLR4) and receptor for advanced glycation endproducts (AGER). Binding to TLR4 and AGER activates the MAP-kinase and NF-kappa-B signaling pathways resulting in the amplification of the pro-inflammatory cascade. Has antimicrobial activity towards bacteria and fungi and exerts its antimicrobial activity probably via chelation of Zn(2+) which is essential for microbial growth. Can induce cell death via autophagy and apoptosis and this occurs through the cross-talk of mitochondria and lysosomes via reactive oxygen species (ROS) and the process involves BNIP3. Can regulate neutrophil number and apoptosis by an anti-apoptotic effect; regulates cell survival via ITGAM/ITGB and TLR4 and a signaling mechanism involving MEK-ERK. Its role as an oxidant scavenger has a protective role in preventing exaggerated tissue damage by scavenging oxidants. The iNOS-S100A8/A9 transnitrosylase complex is proposed to direct selective inflammatory stimulus-dependent S-nitrosylation of multiple targets such as GAPDH, NXA5, EZR, MSN and VIM by recognizing a [IL]-x-C-x-x-[DE] motif. The polypeptide is Protein S100-A9 (S100a9) (Rattus norvegicus (Rat)).